The following is a 281-amino-acid chain: Large ribosomal subunit protein uL2 (281 aa).

Positions 27-38 (DSPEKSLTEPLK) are enriched in basic and acidic residues. Disordered regions lie at residues 27–59 (DSPE…GGHK) and 225–281 (AMNP…ARSQ). Positions 45 to 59 (VHGHITRRHQGGGHK) are enriched in basic residues.

This sequence belongs to the universal ribosomal protein uL2 family. As to quaternary structure, part of the 50S ribosomal subunit. Forms a bridge to the 30S subunit in the 70S ribosome.

Its function is as follows. One of the primary rRNA binding proteins. Required for association of the 30S and 50S subunits to form the 70S ribosome, for tRNA binding and peptide bond formation. It has been suggested to have peptidyltransferase activity; this is somewhat controversial. Makes several contacts with the 16S rRNA in the 70S ribosome. This Myxococcus xanthus (strain DK1622) protein is Large ribosomal subunit protein uL2.